Consider the following 231-residue polypeptide: Probable glutathione S-transferase GSTU1 (231 aa).

Residues K5–P84 enclose the GST N-terminal domain. Glutathione-binding positions include S15, K42, I56, and E68–S69. Residues A97–F220 form the GST C-terminal domain.

The protein belongs to the GST superfamily. Tau family.

It catalyses the reaction RX + glutathione = an S-substituted glutathione + a halide anion + H(+). Functionally, conjugation of reduced glutathione to a wide number of exogenous and endogenous hydrophobic electrophiles. The polypeptide is Probable glutathione S-transferase GSTU1 (GSTU1) (Oryza sativa subsp. japonica (Rice)).